We begin with the raw amino-acid sequence, 312 residues long: Ribonuclease Z (312 aa).

Residues His62, His64, Asp66, His67, His144, Asp215, and His273 each contribute to the Zn(2+) site. Asp66 serves as the catalytic Proton acceptor.

Belongs to the RNase Z family. Homodimer. Requires Zn(2+) as cofactor.

The catalysed reaction is Endonucleolytic cleavage of RNA, removing extra 3' nucleotides from tRNA precursor, generating 3' termini of tRNAs. A 3'-hydroxy group is left at the tRNA terminus and a 5'-phosphoryl group is left at the trailer molecule.. Its function is as follows. Zinc phosphodiesterase, which displays some tRNA 3'-processing endonuclease activity. Probably involved in tRNA maturation, by removing a 3'-trailer from precursor tRNA. This is Ribonuclease Z from Prochlorococcus marinus (strain MIT 9515).